The sequence spans 1161 residues: PAN2-PAN3 deadenylation complex catalytic subunit pan2 (1161 aa).

WD repeat units lie at residues 20-59 (GLPT…RYTS), 102-145 (AHEE…DKLQ), and 276-315 (ANVS…HFNE). The segment at 316-452 (MSKEVEFADV…GAKLNGEAED (137 aa)) is linker. A USP domain is found at 453–822 (DPLLKYSNVE…IPCVLAYQAR (370 aa)). One can recognise an Exonuclease domain in the interval 871 to 1049 (VALDTEFVDL…VEDARMALRL (179 aa)). 4 residues coordinate a divalent metal cation: Asp-874, Glu-876, Asp-983, and Asp-1042. Residues 1094–1161 (GTAVTMQNNS…GDFFGGSPLK (68 aa)) form a disordered region. Residues 1097–1110 (VTMQNNSGRNTPST) show a composition bias toward polar residues. The segment covering 1116 to 1129 (AAAAAATTSAPATP) has biased composition (low complexity). Gly residues predominate over residues 1145 to 1155 (TFGGPGTGDFF).

This sequence belongs to the peptidase C19 family. PAN2 subfamily. Forms a heterotrimer with an asymmetric homodimer of the regulatory subunit pan3 to form the poly(A)-nuclease (PAN) deadenylation complex. A divalent metal cation serves as cofactor.

Its subcellular location is the cytoplasm. It carries out the reaction Exonucleolytic cleavage of poly(A) to 5'-AMP.. Positively regulated by the regulatory subunit pan3. In terms of biological role, catalytic subunit of the poly(A)-nuclease (PAN) deadenylation complex, one of two cytoplasmic mRNA deadenylases involved in mRNA turnover. PAN specifically shortens poly(A) tails of RNA and the activity is stimulated by poly(A)-binding protein pab1. PAN deadenylation is followed by rapid degradation of the shortened mRNA tails by the CCR4-NOT complex. Deadenylated mRNAs are then degraded by two alternative mechanisms, namely exosome-mediated 3'-5' exonucleolytic degradation, or deadenylation-dependent mRNA decaping and subsequent 5'-3' exonucleolytic degradation by xrn1. May also be involved in post-transcriptional maturation of mRNA poly(A) tails. The chain is PAN2-PAN3 deadenylation complex catalytic subunit pan2 from Aspergillus clavatus (strain ATCC 1007 / CBS 513.65 / DSM 816 / NCTC 3887 / NRRL 1 / QM 1276 / 107).